Here is a 534-residue protein sequence, read N- to C-terminus: NAD(P)H-quinone oxidoreductase chain 4 (534 aa).

The next 14 helical transmembrane spans lie at 12-32 (FPWL…IPFF), 44-64 (FALS…INGF), 96-116 (MPLI…AWPV), 120-140 (PKLF…VFAV), 144-164 (LLFF…LAIW), 176-196 (FIIY…AMGF), 220-240 (ILCY…VPLH), 251-271 (TAPV…YALL), 285-305 (FAPL…LTSF), 314-334 (IAYS…SFSS), 340-360 (AMLQ…LVGA), 384-404 (FALW…SGFV), 425-445 (VVMA…LLSM), and 472-492 (VYII…PRLV).

The protein belongs to the complex I subunit 4 family.

Its subcellular location is the cellular thylakoid membrane. It carries out the reaction a plastoquinone + NADH + (n+1) H(+)(in) = a plastoquinol + NAD(+) + n H(+)(out). It catalyses the reaction a plastoquinone + NADPH + (n+1) H(+)(in) = a plastoquinol + NADP(+) + n H(+)(out). In terms of biological role, NDH-1 shuttles electrons from NAD(P)H, via FMN and iron-sulfur (Fe-S) centers, to quinones in the respiratory chain. The immediate electron acceptor for the enzyme in this species is believed to be plastoquinone. Couples the redox reaction to proton translocation (for every two electrons transferred, four hydrogen ions are translocated across the cytoplasmic membrane), and thus conserves the redox energy in a proton gradient. The protein is NAD(P)H-quinone oxidoreductase chain 4 of Prochlorococcus marinus (strain MIT 9215).